The following is a 380-amino-acid chain: 3-dehydroquinate synthase (380 aa).

NAD(+) is bound by residues Pro-68 to Lys-73, Gly-102 to Asp-106, Thr-126 to Thr-127, Lys-139, and Lys-148. Zn(2+) is bound by residues Glu-181, His-243, and His-259.

Belongs to the sugar phosphate cyclases superfamily. Dehydroquinate synthase family. It depends on NAD(+) as a cofactor. Requires Co(2+) as cofactor. Zn(2+) serves as cofactor.

The protein resides in the cytoplasm. It carries out the reaction 7-phospho-2-dehydro-3-deoxy-D-arabino-heptonate = 3-dehydroquinate + phosphate. The protein operates within metabolic intermediate biosynthesis; chorismate biosynthesis; chorismate from D-erythrose 4-phosphate and phosphoenolpyruvate: step 2/7. Its function is as follows. Catalyzes the conversion of 3-deoxy-D-arabino-heptulosonate 7-phosphate (DAHP) to dehydroquinate (DHQ). This chain is 3-dehydroquinate synthase (aroB), found in Chlamydia pneumoniae (Chlamydophila pneumoniae).